The primary structure comprises 485 residues: Cysteine--tRNA ligase (485 aa).

Cys27 lines the Zn(2+) pocket. Positions 29–39 match the 'HIGH' region motif; that stretch reads ITAYDLCHLGH. Zn(2+) contacts are provided by Cys208, His233, and Glu237. Residues 265-269 carry the 'KMSKS' region motif; that stretch reads KMSKS. Lys268 is an ATP binding site.

Belongs to the class-I aminoacyl-tRNA synthetase family. Monomer. It depends on Zn(2+) as a cofactor.

It localises to the cytoplasm. The catalysed reaction is tRNA(Cys) + L-cysteine + ATP = L-cysteinyl-tRNA(Cys) + AMP + diphosphate. The sequence is that of Cysteine--tRNA ligase from Oleidesulfovibrio alaskensis (strain ATCC BAA-1058 / DSM 17464 / G20) (Desulfovibrio alaskensis).